Reading from the N-terminus, the 483-residue chain is Aspartyl/glutamyl-tRNA(Asn/Gln) amidotransferase subunit B (483 aa).

It belongs to the GatB/GatE family. GatB subfamily. Heterotrimer of A, B and C subunits.

The enzyme catalyses L-glutamyl-tRNA(Gln) + L-glutamine + ATP + H2O = L-glutaminyl-tRNA(Gln) + L-glutamate + ADP + phosphate + H(+). It carries out the reaction L-aspartyl-tRNA(Asn) + L-glutamine + ATP + H2O = L-asparaginyl-tRNA(Asn) + L-glutamate + ADP + phosphate + 2 H(+). Allows the formation of correctly charged Asn-tRNA(Asn) or Gln-tRNA(Gln) through the transamidation of misacylated Asp-tRNA(Asn) or Glu-tRNA(Gln) in organisms which lack either or both of asparaginyl-tRNA or glutaminyl-tRNA synthetases. The reaction takes place in the presence of glutamine and ATP through an activated phospho-Asp-tRNA(Asn) or phospho-Glu-tRNA(Gln). This chain is Aspartyl/glutamyl-tRNA(Asn/Gln) amidotransferase subunit B, found in Lachnospira eligens (strain ATCC 27750 / DSM 3376 / VPI C15-48 / C15-B4) (Eubacterium eligens).